The chain runs to 111 residues: Cytochrome b-c1 complex subunit 7 (111 aa).

A2 carries the post-translational modification N-acetylalanine. K19 carries the post-translational modification N6-acetyllysine. At K78 the chain carries N6-acetyllysine; alternate. K78 is subject to N6-succinyllysine; alternate. K83 carries the post-translational modification N6-acetyllysine. At K88 the chain carries N6-acetyllysine; alternate. Residue K88 is modified to N6-succinyllysine; alternate. K96 is modified (N6-acetyllysine).

Belongs to the UQCRB/QCR7 family. As to quaternary structure, component of the ubiquinol-cytochrome c oxidoreductase (cytochrome b-c1 complex, complex III, CIII), a multisubunit enzyme composed of 11 subunits. The complex is composed of 3 respiratory subunits cytochrome b, cytochrome c1 and Rieske protein UQCRFS1, 2 core protein subunits UQCRC1/QCR1 and UQCRC2/QCR2, and 6 low-molecular weight protein subunits UQCRH/QCR6, UQCRB/QCR7, UQCRQ/QCR8, UQCR10/QCR9, UQCR11/QCR10 and subunit 9, the cleavage product of Rieske protein UQCRFS1. The complex exists as an obligatory dimer and forms supercomplexes (SCs) in the inner mitochondrial membrane with NADH-ubiquinone oxidoreductase (complex I, CI) and cytochrome c oxidase (complex IV, CIV), resulting in different assemblies (supercomplex SCI(1)III(2)IV(1) and megacomplex MCI(2)III(2)IV(2)).

The protein localises to the mitochondrion inner membrane. Functionally, component of the ubiquinol-cytochrome c oxidoreductase, a multisubunit transmembrane complex that is part of the mitochondrial electron transport chain which drives oxidative phosphorylation. The respiratory chain contains 3 multisubunit complexes succinate dehydrogenase (complex II, CII), ubiquinol-cytochrome c oxidoreductase (cytochrome b-c1 complex, complex III, CIII) and cytochrome c oxidase (complex IV, CIV), that cooperate to transfer electrons derived from NADH and succinate to molecular oxygen, creating an electrochemical gradient over the inner membrane that drives transmembrane transport and the ATP synthase. The cytochrome b-c1 complex catalyzes electron transfer from ubiquinol to cytochrome c, linking this redox reaction to translocation of protons across the mitochondrial inner membrane, with protons being carried across the membrane as hydrogens on the quinol. In the process called Q cycle, 2 protons are consumed from the matrix, 4 protons are released into the intermembrane space and 2 electrons are passed to cytochrome c. This chain is Cytochrome b-c1 complex subunit 7 (UQCRB), found in Bos taurus (Bovine).